Reading from the N-terminus, the 59-residue chain is Potassium channel toxin alpha-KTx 15.5 (59 aa).

An N-terminal signal peptide occupies residues 1–22; the sequence is MKFSSIILLTLLICSMSIFGNC. Glutamine 23 carries the post-translational modification Pyrrolidone carboxylic acid. 3 disulfide bridges follow: cysteine 30/cysteine 50, cysteine 35/cysteine 55, and cysteine 39/cysteine 57.

It belongs to the short scorpion toxin superfamily. Potassium channel inhibitor family. Alpha-KTx 15 subfamily. In terms of tissue distribution, expressed by the venom gland.

It is found in the secreted. Blocker of A-type voltage-gated potassium channels of cerebellar granular cells. May also inhibit Kv4/KCND when coexpressed with DPP6 or DPP10. The occlusion of the outer entry of the K(+) conducting pore is partially reversible and affects both open and closed channels. It shares the same target in rat brain than BmTX3 (AC Q8I0L5) and AmmTX3 (AC P60208). This is Potassium channel toxin alpha-KTx 15.5 from Androctonus australis (Sahara scorpion).